Reading from the N-terminus, the 339-residue chain is Ferrochelatase (339 aa).

2 residues coordinate Fe cation: H209 and E290.

This sequence belongs to the ferrochelatase family.

The protein resides in the cytoplasm. The enzyme catalyses heme b + 2 H(+) = protoporphyrin IX + Fe(2+). Its pathway is porphyrin-containing compound metabolism; protoheme biosynthesis; protoheme from protoporphyrin-IX: step 1/1. In terms of biological role, catalyzes the ferrous insertion into protoporphyrin IX. This Rhizobium meliloti (strain 1021) (Ensifer meliloti) protein is Ferrochelatase.